A 105-amino-acid chain; its full sequence is Heat shock protein HspQ (105 aa).

The tract at residues 75-105 (GEMQEEHPEQPSMDELARSIRQQLQAPRLRN) is disordered.

This sequence belongs to the HspQ family.

It is found in the cytoplasm. Involved in the degradation of certain denaturated proteins, including DnaA, during heat shock stress. The sequence is that of Heat shock protein HspQ from Cronobacter sakazakii (strain ATCC BAA-894) (Enterobacter sakazakii).